The following is a 2097-amino-acid chain: 1-phosphatidylinositol 3-phosphate 5-kinase (2097 aa).

Positions 1-44 (MATDDKSSPTLDSANDLPRSPASPSHLTHFKPLTPDQDEPPFKS) are disordered. A2 carries the N-acetylalanine modification. Residues S23 and S48 each carry the phosphoserine; by autocatalysis modification. The segment at 56 to 122 (NKERGEGGQG…AEPACGGHDP (67 aa)) is disordered. Over residues 66–81 (EQQSPSSSWASPQIPS) the composition is skewed to low complexity. S88 is modified (phosphoserine). The FYVE-type zinc finger occupies 158-218 (DSQCKECYDC…ACTYCRKIAL (61 aa)). C164, C167, C180, C183, C188, C191, C210, and C213 together coordinate Zn(2+). 3 positions are modified to phosphoserine: S299, S307, and S312. Phosphoserine; by PKB/AKT1 or PKB/AKT2 is present on S318. Phosphoserine is present on S329. A DEP domain is found at 365–440 (HTSGMEFQDH…DEYALYRPLQ (76 aa)). The segment covering 442–459 (TEFSETPSPDSDSVNSVE) has biased composition (polar residues). The segment at 442 to 469 (TEFSETPSPDSDSVNSVEGHSEPSWFKD) is disordered. Basic and acidic residues predominate over residues 460–469 (GHSEPSWFKD). Position 475 is a phosphoserine (S475). A disordered region spans residues 484 to 505 (GDDNLANSASPSKRTSVSSFQS). Positions 488 to 505 (LANSASPSKRTSVSSFQS) are enriched in polar residues. The chaperonin-like domain stretch occupies residues 616–868 (MMALLQQLLQ…MICVAYHSQL (253 aa)). 4 disordered regions span residues 895–928 (GRGE…EDST), 989–1022 (AVGN…QDDT), 1171–1194 (HSKD…EERG), and 1511–1555 (FQQE…HNGE). Residues 902 to 912 (SQEQVSGSSLP) are compositionally biased toward polar residues. Residues 1175-1184 (ASCTSGGKSG) are compositionally biased toward polar residues. The segment covering 1185–1194 (NKTESDEERG) has biased composition (basic and acidic residues). Phosphoserine occurs at positions 1543 and 1548. At S1668 the chain carries Phosphoserine; by autocatalysis. Residues 1697 to 1742 (EGLPANSALDNRPKSSSPIRLPEISGGQTNRTVEAEPQPTKKASGM) form a disordered region. The residue at position 1753 (S1753) is a Phosphoserine. Residues 1757–2083 (SSQKRETLRG…RFCEAMDKYF (327 aa)) form the PIPK domain. Residues 1781-1800 (GLESQGLEPQDEVDGGDTQK) form a disordered region. The tract at residues 1841–2097 (EEEFIRSLSH…DHWTGLDLNC (257 aa)) is catalytic. Phosphoserine; by autocatalysis is present on residues S1968 and S2052.

As to quaternary structure, component of the PI(3,5)P2 regulatory complex/PAS complex, at least composed of PIKFYVE, FIG4 and VAC14. VAC14 nucleates the assembly of the complex and serves as a scaffold by pentamerizing into a star-shaped structure, which can bind a single copy each of PIKFYVE and FIG4 and coordinates their activities. Interacts (via chaperonin-like domain) with RABEPK; the interaction recruits RABEPK to the endosomal membrane. Interacts with SPAG9. Interacts with EGFR. The cofactor is Mn(2+). Phosphorylated in response to insulin at Ser-318 in a protein kinase B (PKB)-dependent manner. Autophosphorylates which down-regulates lipid product formation. Post-translationally, autophosphorylates which inhibits its own phosphatidylinositol 3-phosphate 5-kinase activity, stimulates FIG4 lipid phosphatase activity and down-regulates lipid product formation. Dephosphorylated by FIG4 in the PI(3,5)P2 regulatory complex, at Ser-48, Ser-1668 and Ser-2052. Phosphorylated in response to insulin at Ser-318 in a protein kinase B (PKB)-dependent manner. In terms of tissue distribution, ubiquitous.

It is found in the endosome membrane. The protein resides in the early endosome membrane. It localises to the cytoplasmic vesicle. The protein localises to the phagosome membrane. Its subcellular location is the late endosome membrane. The enzyme catalyses a 1,2-diacyl-sn-glycero-3-phospho-(1D-myo-inositol-3-phosphate) + ATP = a 1,2-diacyl-sn-glycero-3-phospho-(1D-myo-inositol-3,5-bisphosphate) + ADP + H(+). The catalysed reaction is a 1,2-diacyl-sn-glycero-3-phospho-(1D-myo-inositol) + ATP = a 1,2-diacyl-sn-glycero-3-phospho-(1D-myo-inositol-5-phosphate) + ADP + H(+). It catalyses the reaction L-seryl-[protein] + ATP = O-phospho-L-seryl-[protein] + ADP + H(+). Inhibited by apilimod and YM201636. Dual specificity kinase implicated in myriad essential cellular processes such as maintenance of endomembrane homeostasis, and endocytic-vacuolar pathway, lysosomal trafficking, nuclear transport, stress- or hormone-induced signaling and cell cycle progression. The PI(3,5)P2 regulatory complex regulates both the synthesis and turnover of phosphatidylinositol 3,5-bisphosphate (PtdIns(3,5)P2). Sole enzyme to catalyze the phosphorylation of phosphatidylinositol 3-phosphate on the fifth hydroxyl of the myo-inositol ring, to form (PtdIns(3,5)P2). Also catalyzes the phosphorylation of phosphatidylinositol on the fifth hydroxyl of the myo-inositol ring, to form phosphatidylinositol 5-phosphate (PtdIns(5)P). Has serine-protein kinase activity and is able to autophosphorylate and transphosphorylate. Autophosphorylation inhibits its own phosphatidylinositol 3-phosphate 5-kinase activity, stimulates FIG4 lipid phosphatase activity and down-regulates lipid product formation. Involved in key endosome operations such as fission and fusion in the course of endosomal cargo transport. Required for the maturation of early into late endosomes, phagosomes and lysosomes. Regulates vacuole maturation and nutrient recovery following engulfment of macromolecules, initiates the redistribution of accumulated lysosomal contents back into the endosome network. Critical regulator of the morphology, degradative activity, and protein turnover of the endolysosomal system in macrophages and platelets. In neutrophils, critical to perform chemotaxis, generate ROS, and undertake phagosome fusion with lysosomes. Plays a key role in the processing and presentation of antigens by major histocompatibility complex class II (MHC class II) mediated by CTSS. Regulates melanosome biogenesis by controlling the delivery of proteins from the endosomal compartment to the melanosome. Essential for systemic glucose homeostasis, mediates insulin-induced signals for endosome/actin remodeling in the course of GLUT4 translocation/glucose uptake activation. Supports microtubule-based endosome-to-trans-Golgi network cargo transport, trhough association with SPAG9 and RABEPK. Mediates EGFR trafficking to the nucleus. This chain is 1-phosphatidylinositol 3-phosphate 5-kinase, found in Mus musculus (Mouse).